We begin with the raw amino-acid sequence, 658 residues long: Carnitine O-palmitoyltransferase 2, mitochondrial (658 aa).

The N-terminal 26 residues, 1 to 26, are a transit peptide targeting the mitochondrion; sequence MARLLTSSSALRWGAVSSSQSVGRAY. Residues 27–179 lie on the Mitochondrial matrix side of the membrane; that stretch reads SSGSPDTEYV…GYLEPEIFHL (153 aa). An intramembrane region (note=Mitochondrial inner membrane) is located at residues 180-209; it reads NPAKSDTLTFRKLIRFVPSSLSWYGAYMVN. The Mitochondrial matrix portion of the chain corresponds to 210–658; the sequence is AYPLDMSQYF…FTVLQDKPIK (449 aa). His-373 (proton acceptor) is an active-site residue. 453–465 serves as a coordination point for CoA; sequence GKELLKTQKLSPD. Residues Tyr-487, Ser-489, and Thr-500 each coordinate (R)-carnitine.

This sequence belongs to the carnitine/choline acetyltransferase family.

It is found in the mitochondrion inner membrane. The enzyme catalyses (R)-carnitine + hexadecanoyl-CoA = O-hexadecanoyl-(R)-carnitine + CoA. It catalyses the reaction octanoyl-CoA + (R)-carnitine = O-octanoyl-(R)-carnitine + CoA. It carries out the reaction decanoyl-CoA + (R)-carnitine = O-decanoyl-(R)-carnitine + CoA. The catalysed reaction is dodecanoyl-CoA + (R)-carnitine = O-dodecanoyl-R-carnitine + CoA. The enzyme catalyses tetradecanoyl-CoA + (R)-carnitine = O-tetradecanoyl-(R)-carnitine + CoA. It catalyses the reaction (R)-carnitine + octadecanoyl-CoA = O-octadecanoyl-(R)-carnitine + CoA. It carries out the reaction eicosanoyl-CoA + (R)-carnitine = O-eicosanoyl-(R)-carnitine + CoA. The catalysed reaction is (9Z)-tetradecenoyl-CoA + (R)-carnitine = O-(9Z)-tetradecenoyl-(R)-carnitine + CoA. The enzyme catalyses (5Z)-tetradecenoyl-CoA + (R)-carnitine = O-(5Z)-tetradecenoyl-(R)-carnitine + CoA. It catalyses the reaction (R)-carnitine + (9Z)-octadecenoyl-CoA = O-(9Z)-octadecenoyl-(R)-carnitine + CoA. It carries out the reaction 4,8-dimethylnonanoyl-CoA + (R)-carnitine = O-4,8-dimethylnonanoyl-(R)-carnitine + CoA. Its pathway is lipid metabolism; fatty acid beta-oxidation. Functionally, involved in the intramitochondrial synthesis of acylcarnitines from accumulated acyl-CoA metabolites. Reconverts acylcarnitines back into the respective acyl-CoA esters that can then undergo beta-oxidation, an essential step for the mitochondrial uptake of long-chain fatty acids and their subsequent beta-oxidation in the mitochondrion. Active with medium (C8-C12) and long-chain (C14-C18) acyl-CoA esters. This Xenopus tropicalis (Western clawed frog) protein is Carnitine O-palmitoyltransferase 2, mitochondrial (cpt2).